The sequence spans 323 residues: 4-hydroxyphenylpyruvate 3-dimethylallyltransferase (323 aa).

Substrate-binding residues include Arg-160 and Glu-281.

Belongs to the aromatic prenyltransferase family. Monomer.

It localises to the cytoplasm. The enzyme catalyses 3-(4-hydroxyphenyl)pyruvate + dimethylallyl diphosphate = 3-dimethylallyl-4-hydroxyphenylpyruvate + diphosphate. It functions in the pathway antibiotic biosynthesis; novobiocin biosynthesis. Functionally, magnesium-independent aromatic prenyltransferase that catalyzes the irreversible transfer of a dimethylallyl group to 4-hydroxyphenylpyruvate to produce the ring A structure in the novobiocin biosynthesis pathway. Novobiocin is an aminocoumarin family antibiotic that targets bacterial DNA gyrases. It is able to prenylate many different compounds, including the phenylpropanoids 4-coumarate and caffeate, the plant polyketide resveratrol, the (iso)flavonoid naringenin, apigenin, daidzein and genistein, and the dihydroxynaphthalenes 1,6-DHN and 2,7-DHN. The sequence is that of 4-hydroxyphenylpyruvate 3-dimethylallyltransferase from Streptomyces niveus (Streptomyces spheroides).